Consider the following 60-residue polypeptide: Cytotoxin 3 (60 aa).

Disulfide bonds link cysteine 3-cysteine 21, cysteine 14-cysteine 38, cysteine 42-cysteine 53, and cysteine 54-cysteine 59.

This sequence belongs to the three-finger toxin family. Short-chain subfamily. Type IA cytotoxin sub-subfamily. In terms of assembly, monomer in solution; Homodimer and oligomer in the presence of negatively charged lipids forming a pore with a size ranging between 20 and 30 Angstroms. In terms of tissue distribution, expressed by the venom gland.

It localises to the secreted. Its subcellular location is the target cell membrane. Functionally, shows cytolytic activity on many different cells by forming pore in lipid membranes. In vivo, increases heart rate or kills the animal by cardiac arrest. In addition, it binds to heparin with high affinity, interacts with Kv channel-interacting protein 1 (KCNIP1) in a calcium-independent manner, and binds to integrin alpha-V/beta-3 (ITGAV/ITGB3) with moderate affinity. This is Cytotoxin 3 from Naja mossambica (Mozambique spitting cobra).